A 179-amino-acid chain; its full sequence is Casparian strip membrane protein 1 (179 aa).

The Cytoplasmic portion of the chain corresponds to 1–17; that stretch reads MKAGPLQLGVVPPANRA. A helical membrane pass occupies residues 18–38; it reads IAILDFFLRPIAIVGTLASAI. Over 39-67 the chain is Extracellular; it reads AMATTNQTLPFFSQFIRFRAKFNDLPSFT. Asn-44 carries an N-linked (GlcNAc...) asparagine glycan. A helical transmembrane segment spans residues 68–88; sequence FFVVASSIVSAYLILSLGFSI. The Cytoplasmic portion of the chain corresponds to 89-100; sequence LHIAKSNLVNSR. Residues 101 to 121 form a helical membrane-spanning segment; it reads VLLLLLDTAAMGLLMAGSAAA. Over 122-154 the chain is Extracellular; the sequence is TAIVQLAHKGNNKVNWFAICQQYNSFCKRVSGS. The chain crosses the membrane as a helical span at residues 155–175; that stretch reads LIGSYAGVVVLILLILLSGVA. Topologically, residues 176–179 are cytoplasmic; it reads LSRR.

It belongs to the Casparian strip membrane proteins (CASP) family. In terms of assembly, homodimer and heterodimers.

Its subcellular location is the cell membrane. In terms of biological role, regulates membrane-cell wall junctions and localized cell wall deposition. Required for establishment of the Casparian strip membrane domain (CSD) and the subsequent formation of Casparian strips, a cell wall modification of the root endodermis that determines an apoplastic barrier between the intraorganismal apoplasm and the extraorganismal apoplasm and prevents lateral diffusion. In Lactuca sativa (Garden lettuce), this protein is Casparian strip membrane protein 1.